We begin with the raw amino-acid sequence, 270 residues long: Formamidopyrimidine-DNA glycosylase (270 aa).

Residue Pro2 is the Schiff-base intermediate with DNA of the active site. The Proton donor role is filled by Glu3. The active-site Proton donor; for beta-elimination activity is the Lys58. DNA-binding residues include His90 and Arg109. The FPG-type zinc finger occupies 237–270; sequence KVYGKEGEQCECGHTIERYTLGGRSTFLCSSCQK. Arg260 serves as the catalytic Proton donor; for delta-elimination activity.

It belongs to the FPG family. Monomer. The cofactor is Zn(2+).

It catalyses the reaction Hydrolysis of DNA containing ring-opened 7-methylguanine residues, releasing 2,6-diamino-4-hydroxy-5-(N-methyl)formamidopyrimidine.. It carries out the reaction 2'-deoxyribonucleotide-(2'-deoxyribose 5'-phosphate)-2'-deoxyribonucleotide-DNA = a 3'-end 2'-deoxyribonucleotide-(2,3-dehydro-2,3-deoxyribose 5'-phosphate)-DNA + a 5'-end 5'-phospho-2'-deoxyribonucleoside-DNA + H(+). In terms of biological role, involved in base excision repair of DNA damaged by oxidation or by mutagenic agents. Acts as a DNA glycosylase that recognizes and removes damaged bases. Has a preference for oxidized purines, such as 7,8-dihydro-8-oxoguanine (8-oxoG). Has AP (apurinic/apyrimidinic) lyase activity and introduces nicks in the DNA strand. Cleaves the DNA backbone by beta-delta elimination to generate a single-strand break at the site of the removed base with both 3'- and 5'-phosphates. This Zymomonas mobilis subsp. mobilis (strain ATCC 31821 / ZM4 / CP4) protein is Formamidopyrimidine-DNA glycosylase (mutM).